An 85-amino-acid polypeptide reads, in one-letter code: uncharacterized protein (85 aa).

The next 2 membrane-spanning stretches (helical) occupy residues 16 to 34 (WALS…CAYL) and 50 to 71 (LSCI…KIIF).

This sequence to E.coli YhdT.

The protein localises to the cell membrane. This is an uncharacterized protein from Haemophilus influenzae (strain ATCC 51907 / DSM 11121 / KW20 / Rd).